A 210-amino-acid polypeptide reads, in one-letter code: Cytochrome c biogenesis ATP-binding export protein CcmA (210 aa).

Residues 3–209 enclose the ABC transporter domain; that stretch reads LTVTNLACAR…PADDPFAGVT (207 aa). 35 to 42 contributes to the ATP binding site; sequence GPNGIGKT.

Belongs to the ABC transporter superfamily. CcmA exporter (TC 3.A.1.107) family. In terms of assembly, the complex is composed of two ATP-binding proteins (CcmA) and two transmembrane proteins (CcmB).

Its subcellular location is the cell inner membrane. It catalyses the reaction heme b(in) + ATP + H2O = heme b(out) + ADP + phosphate + H(+). In terms of biological role, part of the ABC transporter complex CcmAB involved in the biogenesis of c-type cytochromes; once thought to export heme, this seems not to be the case, but its exact role is uncertain. Responsible for energy coupling to the transport system. This chain is Cytochrome c biogenesis ATP-binding export protein CcmA, found in Cereibacter sphaeroides (strain ATCC 17023 / DSM 158 / JCM 6121 / CCUG 31486 / LMG 2827 / NBRC 12203 / NCIMB 8253 / ATH 2.4.1.) (Rhodobacter sphaeroides).